Here is a 438-residue protein sequence, read N- to C-terminus: GRAS family protein TF80 (438 aa).

The GRAS domain maps to 13–436 (LRYDSHGSNP…RPLFSVSAWK (424 aa)). A leucine repeat I (LRI) region spans residues 20–81 (SNPMIPLIEC…YKIVKHLPGV (62 aa)). The VHIID stretch occupies residues 100–165 (QKYFYDLCPF…GGPPFLKITG (66 aa)). Positions 131 to 135 (VHIID) match the VHIID motif. Positions 175–207 (QMSFHLTTEAGILDFPLQFNPIISKLEDVDFEN) are leucine repeat II (LRII). The interval 216-359 (VAISSVLQLH…SMLLGEQIKN (144 aa)) is PFYRE. Positions 224–228 (LHSLL) match the LXXLL motif motif. Residues 362 to 436 (TCEGVDRKER…RPLFSVSAWK (75 aa)) are SAW.

The protein belongs to the GRAS family. Interacts with RAM1.

It localises to the nucleus. In Medicago truncatula (Barrel medic), this protein is GRAS family protein TF80 (TF80).